A 426-amino-acid polypeptide reads, in one-letter code: uncharacterized protein (426 aa).

The segment at 17–114 is disordered; it reads KRDRPFSPDR…PDKKGEYIYP (98 aa).

The protein resides in the plastid. This is an uncharacterized protein from Euglena longa (Euglenophycean alga).